The chain runs to 221 residues: Ribonuclease T (221 aa).

The 175-residue stretch at Val21 to Phe195 folds into the Exonuclease domain. Mg(2+)-binding residues include Asp24, Glu26, His182, and Asp187. Residue His182 is the Proton donor/acceptor of the active site.

Belongs to the RNase T family. Homodimer. Mg(2+) is required as a cofactor.

Its function is as follows. Trims short 3' overhangs of a variety of RNA species, leaving a one or two nucleotide 3' overhang. Responsible for the end-turnover of tRNA: specifically removes the terminal AMP residue from uncharged tRNA (tRNA-C-C-A). Also appears to be involved in tRNA biosynthesis. In Marinobacter nauticus (strain ATCC 700491 / DSM 11845 / VT8) (Marinobacter aquaeolei), this protein is Ribonuclease T.